The chain runs to 479 residues: Anaerobic nitric oxide reductase flavorubredoxin (479 aa).

The segment at L30–I210 is zinc metallo-hydrolase. H79, E81, D83, H147, D166, and H227 together coordinate Fe cation. The 140-residue stretch at I254–A393 folds into the Flavodoxin-like domain. FMN is bound by residues T260–N264 and A342–L369. Residues G423–L474 form the Rubredoxin-like domain. Fe cation-binding residues include C428, C431, C461, and C464.

The protein in the N-terminal section; belongs to the zinc metallo-hydrolase group 3 family. As to quaternary structure, homotetramer. Fe cation serves as cofactor. FMN is required as a cofactor.

It localises to the cytoplasm. Its pathway is nitrogen metabolism; nitric oxide reduction. In terms of biological role, anaerobic nitric oxide reductase; uses NADH to detoxify nitric oxide (NO), protecting several 4Fe-4S NO-sensitive enzymes. Has at least 2 reductase partners, only one of which (NorW, flavorubredoxin reductase) has been identified. NO probably binds to the di-iron center; electrons enter from the NorW at rubredoxin and are transferred sequentially to the FMN center and the di-iron center. Also able to function as an aerobic oxygen reductase. This chain is Anaerobic nitric oxide reductase flavorubredoxin, found in Salmonella paratyphi A (strain ATCC 9150 / SARB42).